The sequence spans 123 residues: Large ribosomal subunit protein uL14c (123 aa).

It belongs to the universal ribosomal protein uL14 family. In terms of assembly, part of the 50S ribosomal subunit.

Its subcellular location is the plastid. It localises to the chloroplast. Functionally, binds to 23S rRNA. In Brachypodium distachyon (Purple false brome), this protein is Large ribosomal subunit protein uL14c.